The sequence spans 188 residues: MKIYIIDNGGQWTHREWRTVRDLGVDSTIVPNTVDADVLADADGIILSGGPASIESEISKLGNIKEYMHRYNYPVLGICVGAQFIAIDSGGRVSKALHAEYGKKIVNFTSKDGIFYNIPDSINAWENHNDEIKSISDDYIICAYSDTCRVQAFYHKNRDIFGVQFHPEVNNTEHGTTIFKNFIEKCRR.

Positions 2-188 (KIYIIDNGGQ…FKNFIEKCRR (187 aa)) constitute a Glutamine amidotransferase type-1 domain. C79 acts as the Nucleophile in catalysis. Active-site residues include H166 and E168.

In terms of assembly, heterodimer composed of a glutamine amidotransferase subunit (A) and a GMP-binding subunit (B).

The catalysed reaction is XMP + L-glutamine + ATP + H2O = GMP + L-glutamate + AMP + diphosphate + 2 H(+). It functions in the pathway purine metabolism; GMP biosynthesis; GMP from XMP (L-Gln route): step 1/1. Its function is as follows. Catalyzes the synthesis of GMP from XMP. In Picrophilus torridus (strain ATCC 700027 / DSM 9790 / JCM 10055 / NBRC 100828 / KAW 2/3), this protein is GMP synthase [glutamine-hydrolyzing] subunit A.